The chain runs to 393 residues: Chorismate synthase (393 aa).

The NADP(+) site is built by Arg-40 and Arg-46. Residues 129-131 (RSS), 249-250 (QA), Gly-301, 316-320 (KPIPT), and Arg-342 each bind FMN.

Belongs to the chorismate synthase family. As to quaternary structure, homotetramer. The cofactor is FMNH2.

The catalysed reaction is 5-O-(1-carboxyvinyl)-3-phosphoshikimate = chorismate + phosphate. Its pathway is metabolic intermediate biosynthesis; chorismate biosynthesis; chorismate from D-erythrose 4-phosphate and phosphoenolpyruvate: step 7/7. Functionally, catalyzes the anti-1,4-elimination of the C-3 phosphate and the C-6 proR hydrogen from 5-enolpyruvylshikimate-3-phosphate (EPSP) to yield chorismate, which is the branch point compound that serves as the starting substrate for the three terminal pathways of aromatic amino acid biosynthesis. This reaction introduces a second double bond into the aromatic ring system. The protein is Chorismate synthase of Geotalea uraniireducens (strain Rf4) (Geobacter uraniireducens).